A 228-amino-acid polypeptide reads, in one-letter code: Venom allergen 5 (228 aa).

The N-terminal stretch at 1-22 (MTKIDLLARVFVIATIIALATA) is a signal peptide. 3 cysteine pairs are disulfide-bonded: Cys30–Cys124, Cys51–Cys117, and Cys195–Cys212. The SCP domain occupies 69 to 214 (KEHNDYGHKV…WNKHFLVCNY (146 aa)).

The protein belongs to the CRISP family. Venom allergen 5-like subfamily. Expressed by the venom gland.

The protein resides in the secreted. This Rhynchium brunneum (Potter wasp) protein is Venom allergen 5.